Here is a 76-residue protein sequence, read N- to C-terminus: Serine proteinase inhibitor IA-1 (76 aa).

Position 1 is an N-acetylserine (serine 1).

Belongs to the protease inhibitor I9 family.

Specifically inhibits an endogenous intracellular serine proteinase (proteinase A). The polypeptide is Serine proteinase inhibitor IA-1 (Pleurotus ostreatus (Oyster mushroom)).